The following is a 391-amino-acid chain: Pyruvate dehydrogenase E1 component subunit beta-3, chloroplastic (391 aa).

The N-terminal 35 residues, 1–35, are a transit peptide targeting the chloroplast; it reads MATAAAASLQYALHGAASASAKPRSAAPGRSVRVV. Glu-127 contributes to the thiamine diphosphate binding site. Ile-180, Ala-228, Ile-229, and Asn-233 together coordinate K(+).

In terms of assembly, tetramer of 2 alpha and 2 beta subunits. Thiamine diphosphate is required as a cofactor.

Its subcellular location is the plastid. It is found in the chloroplast. The catalysed reaction is N(6)-[(R)-lipoyl]-L-lysyl-[protein] + pyruvate + H(+) = N(6)-[(R)-S(8)-acetyldihydrolipoyl]-L-lysyl-[protein] + CO2. In terms of biological role, the pyruvate dehydrogenase complex catalyzes the overall conversion of pyruvate to acetyl-CoA and CO(2). It contains multiple copies of three enzymatic components: pyruvate dehydrogenase (E1), dihydrolipoamide acetyltransferase (E2) and lipoamide dehydrogenase (E3). The protein is Pyruvate dehydrogenase E1 component subunit beta-3, chloroplastic of Oryza sativa subsp. japonica (Rice).